We begin with the raw amino-acid sequence, 307 residues long: Probable GTP 3',8-cyclase (307 aa).

Positions 4–222 constitute a Radical SAM core domain; that stretch reads ALGREVRSVR…RTFHSREVYR (219 aa). Arg13 is a binding site for GTP. [4Fe-4S] cluster-binding residues include Cys20 and Cys24. Tyr26 is a binding site for S-adenosyl-L-methionine. A [4Fe-4S] cluster-binding site is contributed by Cys27. Lys60 provides a ligand contact to GTP. Residues Gly64 and Ser112 each coordinate S-adenosyl-L-methionine. Residue Lys150 coordinates GTP. [4Fe-4S] cluster contacts are provided by Cys240 and Cys243. 245-247 is a binding site for GTP; the sequence is RIR. Cys257 contacts [4Fe-4S] cluster.

This sequence belongs to the radical SAM superfamily. MoaA family. It depends on [4Fe-4S] cluster as a cofactor.

It catalyses the reaction GTP + AH2 + S-adenosyl-L-methionine = (8S)-3',8-cyclo-7,8-dihydroguanosine 5'-triphosphate + 5'-deoxyadenosine + L-methionine + A + H(+). It functions in the pathway cofactor biosynthesis; molybdopterin biosynthesis. Functionally, catalyzes the cyclization of GTP to (8S)-3',8-cyclo-7,8-dihydroguanosine 5'-triphosphate. The sequence is that of Probable GTP 3',8-cyclase from Methanopyrus kandleri (strain AV19 / DSM 6324 / JCM 9639 / NBRC 100938).